We begin with the raw amino-acid sequence, 165 residues long: Transcriptional regulator MraZ (165 aa).

SpoVT-AbrB domains lie at 5-51 (TYEG…GEEL) and 80-123 (SAEL…NPER).

Belongs to the MraZ family. In terms of assembly, forms oligomers.

It localises to the cytoplasm. The protein resides in the nucleoid. This is Transcriptional regulator MraZ from Hyphomonas neptunium (strain ATCC 15444).